We begin with the raw amino-acid sequence, 147 residues long: Ubiquitin-like-conjugating enzyme ATG10 (147 aa).

Cys-116 functions as the Glycyl thioester intermediate in the catalytic mechanism.

It belongs to the ATG10 family. As to quaternary structure, forms homooligomers. Interacts with ATG10. Interacts with ATG7 and ATG12.

The protein resides in the preautophagosomal structure membrane. Its function is as follows. E2-like enzyme required for the cytoplasm to vacuole transport (Cvt), autophagy and nucleophagy. Acts as an E2-like enzyme that catalyzes the conjugation of ATG12 to ATG5. ATG12 conjugation to ATG5 is required for proper localization of ATG8 to the preautophagosomal structure (PAS). Likely serves as an ATG5-recognition molecule. The polypeptide is Ubiquitin-like-conjugating enzyme ATG10 (Kluyveromyces marxianus (strain DMKU3-1042 / BCC 29191 / NBRC 104275) (Yeast)).